Here is a 512-residue protein sequence, read N- to C-terminus: 2,3-bisphosphoglycerate-independent phosphoglycerate mutase (512 aa).

Mn(2+) is bound by residues aspartate 11 and serine 61. The Phosphoserine intermediate role is filled by serine 61. Substrate is bound by residues histidine 122, arginine 152 to aspartate 153, arginine 184, arginine 190, arginine 259 to arginine 262, and lysine 332. 5 residues coordinate Mn(2+): aspartate 399, histidine 403, aspartate 440, histidine 441, and histidine 459.

It belongs to the BPG-independent phosphoglycerate mutase family. In terms of assembly, monomer. It depends on Mn(2+) as a cofactor.

It catalyses the reaction (2R)-2-phosphoglycerate = (2R)-3-phosphoglycerate. The protein operates within carbohydrate degradation; glycolysis; pyruvate from D-glyceraldehyde 3-phosphate: step 3/5. Its function is as follows. Catalyzes the interconversion of 2-phosphoglycerate and 3-phosphoglycerate. The polypeptide is 2,3-bisphosphoglycerate-independent phosphoglycerate mutase (Francisella tularensis subsp. holarctica (strain FTNF002-00 / FTA)).